The chain runs to 103 residues: Large ribosomal subunit protein uL24 (103 aa).

It belongs to the universal ribosomal protein uL24 family. In terms of assembly, part of the 50S ribosomal subunit.

One of two assembly initiator proteins, it binds directly to the 5'-end of the 23S rRNA, where it nucleates assembly of the 50S subunit. In terms of biological role, one of the proteins that surrounds the polypeptide exit tunnel on the outside of the subunit. This Alkaliphilus metalliredigens (strain QYMF) protein is Large ribosomal subunit protein uL24.